The following is an 80-amino-acid chain: Conotoxin Ca11.3 (80 aa).

Positions 1 to 19 (MKLVLAIVVILMLLSLSTG) are cleaved as a signal peptide. A propeptide spanning residues 20 to 42 (AEMSDNHASRSATALRDRLLSPK) is cleaved from the precursor. 4 disulfides stabilise this stretch: Cys-46-Cys-60, Cys-53-Cys-65, Cys-59-Cys-72, and Cys-64-Cys-79.

The protein belongs to the conotoxin I3 superfamily. Expressed by the venom duct.

It is found in the secreted. In Conus caracteristicus (Characteristic cone), this protein is Conotoxin Ca11.3.